Consider the following 229-residue polypeptide: Ribonuclease 3 (229 aa).

The RNase III domain occupies 4–133 (WEELQESVGF…FIGALYLDNG (130 aa)). Position 46 (E46) interacts with Mg(2+). Residue D50 is part of the active site. 2 residues coordinate Mg(2+): D119 and E122. E122 is an active-site residue. The 70-residue stretch at 159–228 (DYKTQLQEIV…AQFAINQLTH (70 aa)) folds into the DRBM domain.

Belongs to the ribonuclease III family. In terms of assembly, homodimer. It depends on Mg(2+) as a cofactor.

It is found in the cytoplasm. It carries out the reaction Endonucleolytic cleavage to 5'-phosphomonoester.. Functionally, digests double-stranded RNA. Involved in the processing of primary rRNA transcript to yield the immediate precursors to the large and small rRNAs (23S and 16S). Processes some mRNAs, and tRNAs when they are encoded in the rRNA operon. Processes pre-crRNA and tracrRNA of type II CRISPR loci if present in the organism. The protein is Ribonuclease 3 of Listeria monocytogenes serotype 4a (strain HCC23).